The following is a 337-amino-acid chain: Heme A synthase (337 aa).

5 helical membrane-spanning segments follow: residues 6-26, 87-107, 119-139, 154-174, and 192-212; these read ITKW…IGGI, FIHR…VIYF, LPYI…WYMV, LAFH…QLIK, and LIFS…GALV. Histidine 256 lines the heme pocket. A run of 3 helical transmembrane segments spans residues 258-278, 285-305, and 308-328; these read LVGY…LKIE, IAYF…ITLL, and VPII…SVII. Position 316 (histidine 316) interacts with heme.

The protein belongs to the COX15/CtaA family. Type 2 subfamily. Interacts with CtaB. It depends on heme b as a cofactor.

Its subcellular location is the cell membrane. The enzyme catalyses Fe(II)-heme o + 2 A + H2O = Fe(II)-heme a + 2 AH2. It functions in the pathway porphyrin-containing compound metabolism; heme A biosynthesis; heme A from heme O: step 1/1. Its function is as follows. Catalyzes the conversion of heme O to heme A by two successive hydroxylations of the methyl group at C8. The first hydroxylation forms heme I, the second hydroxylation results in an unstable dihydroxymethyl group, which spontaneously dehydrates, resulting in the formyl group of heme A. This is Heme A synthase from Rickettsia rickettsii (strain Iowa).